Here is a 179-residue protein sequence, read N- to C-terminus: 3-hydroxyanthranilate 3,4-dioxygenase (179 aa).

An O2-binding site is contributed by arginine 47. Fe cation is bound by residues histidine 51, glutamate 57, and histidine 96. Glutamate 57 provides a ligand contact to substrate. The substrate site is built by arginine 100 and glutamate 110. 4 residues coordinate Fe cation: cysteine 125, cysteine 128, cysteine 162, and cysteine 165.

It belongs to the 3-HAO family. Requires Fe(2+) as cofactor.

It catalyses the reaction 3-hydroxyanthranilate + O2 = (2Z,4Z)-2-amino-3-carboxymuconate 6-semialdehyde. It functions in the pathway cofactor biosynthesis; NAD(+) biosynthesis; quinolinate from L-kynurenine: step 3/3. Its function is as follows. Catalyzes the oxidative ring opening of 3-hydroxyanthranilate to 2-amino-3-carboxymuconate semialdehyde, which spontaneously cyclizes to quinolinate. The sequence is that of 3-hydroxyanthranilate 3,4-dioxygenase from Bacillus thuringiensis (strain Al Hakam).